A 288-amino-acid chain; its full sequence is MGTVVYQQGFQSQLNEPRALRLRLSSPNPHFSQPFGLALKSHLLDSSHAEDTRNRNDDKAAASPVSDSSGWSSLQSLSSGSSSSTKTTTSSEKESSYYVQRPSSCRALSDQSLALCTENLGSESGSDVTDIDELFSLDVQTKNLGETTTETRTLKSRKRSVSPSDLPPPLTTMRGFQCIQMRPHRENGRLVMTATNAPPRNGCFQADRSNGRLRLSILKDSNEFVENEEETIEPEETEEYEEEEEEEEDEDEDEVMGIENVQVSRRCVQGDRENRGLLNWESFCVATS.

The segment covering 48–60 (HAEDTRNRNDDKA) has biased composition (basic and acidic residues). Disordered regions lie at residues 48 to 100 (HAED…YYVQ), 146 to 172 (ETTT…PLTT), and 222 to 261 (NEFV…IENV). Positions 66–90 (SDSSGWSSLQSLSSGSSSSTKTTTS) are enriched in low complexity. One can recognise an FAF domain in the interval 165–217 (DLPPPLTTMRGFQCIQMRPHRENGRLVMTATNAPPRNGCFQADRSNGRLRLSI). The span at 223 to 256 (EFVENEEETIEPEETEEYEEEEEEEEDEDEDEVM) shows a compositional bias: acidic residues.

Belongs to the fantastic four family. Expressed in the shoot apex, stamens, young leaves and young siliques, but not in old leaves. Detected in provascular and vascular tissue, but not in the vegetative meristem. In inflorescences, restricted to the vasculature and absent from young flowers, except from anthers.

Its function is as follows. Able to repress WUS when constitutively overexpressed, but have no effect on CLV3. This Arabidopsis thaliana (Mouse-ear cress) protein is Protein FANTASTIC FOUR 3 (FAF3).